The primary structure comprises 41 residues: uncharacterized protein (41 aa).

Positions 1–23 (MNFLMRAIFSLLLLFTLSIPVIS) are cleaved as a signal peptide.

This is an uncharacterized protein from Escherichia coli (strain K12).